Here is a 152-residue protein sequence, read N- to C-terminus: Putative pre-16S rRNA nuclease (152 aa).

This sequence belongs to the YqgF nuclease family.

The protein resides in the cytoplasm. Functionally, could be a nuclease involved in processing of the 5'-end of pre-16S rRNA. This chain is Putative pre-16S rRNA nuclease, found in Sphingopyxis alaskensis (strain DSM 13593 / LMG 18877 / RB2256) (Sphingomonas alaskensis).